Here is a 374-residue protein sequence, read N- to C-terminus: 5-hydroxytryptamine receptor 1D (374 aa).

Over Met1 to Arg35 the chain is Extracellular. Asn5, Asn17, and Asn21 each carry an N-linked (GlcNAc...) asparagine glycan. Residues Ile36–Leu61 traverse the membrane as a helical segment. Over Leu62–Tyr72 the chain is Cytoplasmic. Residues Leu73–Ala94 form a helical membrane-spanning segment. Topologically, residues Tyr95–Ile106 are extracellular. Residues Leu107–Leu131 traverse the membrane as a helical segment. The cysteines at positions 108 and 185 are disulfide-linked. Asp115 and Cys119 together coordinate serotonin. The short motif at Asp132–Tyr134 is the DRY motif; important for ligand-induced conformation changes element. Topologically, residues Asp132 to His151 are cytoplasmic. The helical transmembrane segment at Ala152–Trp173 threads the bilayer. Topologically, residues Arg174 to Gln191 are extracellular. The helical transmembrane segment at Ile192–Gly215 threads the bilayer. Residues Arg216 to Thr297 lie on the Cytoplasmic side of the membrane. A helical membrane pass occupies residues Lys298–Ile323. Serotonin is bound at residue Ser318. The Extracellular segment spans residues Cys324–Pro332. A helical membrane pass occupies residues Ala333 to Phe356. The NPxxY motif; important for ligand-induced conformation changes and signaling motif lies at Asn349–Tyr353. At Asn357–Ser374 the chain is on the cytoplasmic side.

Belongs to the G-protein coupled receptor 1 family. As to quaternary structure, homodimer. Heterodimer with HTR1B. In terms of tissue distribution, detected in the motor column in spinal cord, and in several cranial motor nuclei, including nucleus ambiguous, oculomotoris, trochelaris and abducens. Detected in gamma motor neurons in the lumbar spinal cord. Detected in proprioceptive sensory neurons in dorsal root ganglia.

It is found in the cell membrane. G-protein coupled receptor for 5-hydroxytryptamine (serotonin). Also functions as a receptor for ergot alkaloid derivatives, various anxiolytic and antidepressant drugs and other psychoactive substances. Ligand binding causes a conformation change that triggers signaling via guanine nucleotide-binding proteins (G proteins) and modulates the activity of downstream effectors, such as adenylate cyclase. HTR1D is coupled to G(i)/G(o) G alpha proteins and mediates inhibitory neurotransmission by inhibiting adenylate cyclase activity. Regulates the release of 5-hydroxytryptamine in the brain, and thereby affects neural activity. May also play a role in regulating the release of other neurotransmitters. May play a role in vasoconstriction. The protein is 5-hydroxytryptamine receptor 1D (Htr1d) of Mus musculus (Mouse).